Reading from the N-terminus, the 129-residue chain is Small ribosomal subunit protein uS9 (129 aa).

The span at 104–113 (TRDSRVVERK) shows a compositional bias: basic and acidic residues. Residues 104–129 (TRDSRVVERKKPGKRKARRSRQFSKR) are disordered. Positions 114-129 (KPGKRKARRSRQFSKR) are enriched in basic residues.

The protein belongs to the universal ribosomal protein uS9 family.

The chain is Small ribosomal subunit protein uS9 from Sulfurimonas denitrificans (strain ATCC 33889 / DSM 1251) (Thiomicrospira denitrificans (strain ATCC 33889 / DSM 1251)).